Reading from the N-terminus, the 235-residue chain is Chaperone protein TorD (235 aa).

It belongs to the TorD/DmsD family. TorD subfamily.

It is found in the cytoplasm. Functionally, involved in the biogenesis of TorA. Acts on TorA before the insertion of the molybdenum cofactor and, as a result, probably favors a conformation of the apoenzyme that is competent for acquiring the cofactor. This is Chaperone protein TorD from Shewanella amazonensis (strain ATCC BAA-1098 / SB2B).